The sequence spans 345 residues: Flap endonuclease 1 (345 aa).

The tract at residues 1–103 (MGIKQLSKLL…KELEKRKERR (103 aa)) is N-domain. A Mg(2+)-binding site is contributed by D34. The DNA site is built by R47 and R69. Residues D85, E157, E159, D178, and D180 each coordinate Mg(2+). Positions 121–252 (LMEMYDKRKT…KKALGLIKKH (132 aa)) are I-domain. E157 serves as a coordination point for DNA. 2 residues coordinate DNA: G230 and D232. Residue D232 coordinates Mg(2+). The tract at residues 333-341 (TQGRLDCFI) is interaction with PCNA.

This sequence belongs to the XPG/RAD2 endonuclease family. FEN1 subfamily. In terms of assembly, interacts with PCNA. Three molecules of FEN1 bind to one PCNA trimer with each molecule binding to one PCNA monomer. PCNA stimulates the nuclease activity without altering cleavage specificity. Mg(2+) serves as cofactor. Phosphorylated. Phosphorylation upon DNA damage induces relocalization to the nuclear plasma.

The protein localises to the nucleus. The protein resides in the nucleolus. It localises to the nucleoplasm. It is found in the mitochondrion. Functionally, structure-specific nuclease with 5'-flap endonuclease and 5'-3' exonuclease activities involved in DNA replication and repair. During DNA replication, cleaves the 5'-overhanging flap structure that is generated by displacement synthesis when DNA polymerase encounters the 5'-end of a downstream Okazaki fragment. It enters the flap from the 5'-end and then tracks to cleave the flap base, leaving a nick for ligation. Also involved in the long patch base excision repair (LP-BER) pathway, by cleaving within the apurinic/apyrimidinic (AP) site-terminated flap. Acts as a genome stabilization factor that prevents flaps from equilibrating into structures that lead to duplications and deletions. Also possesses 5'-3' exonuclease activity on nicked or gapped double-stranded DNA, and exhibits RNase H activity. Also involved in replication and repair of rDNA and in repairing mitochondrial DNA. The polypeptide is Flap endonuclease 1 (Encephalitozoon cuniculi (strain GB-M1) (Microsporidian parasite)).